The primary structure comprises 267 residues: Cell cycle checkpoint protein RAD1 homolog mrt-2 (267 aa).

It belongs to the Rad1 family. As to quaternary structure, probable component of the toroidal 9-1-1 (RAD9-RAD1-HUS1) complex, composed of hpr-9, mrt-2 and hus-1. Interacts with hus-1. Might associate with hpr-9.

The protein resides in the nucleus. The catalysed reaction is Exonucleolytic cleavage in the 3'- to 5'-direction to yield nucleoside 5'-phosphates.. Functionally, may be a component of the 9-1-1 cell-cycle checkpoint response complex that plays a major role in DNA repair. Promotes DNA double strand break-induced cell cycle arrest and apoptosis, thereby playing a role in genome stability. Also required for telomere length maintenance and germline immortality. May possess 3'-&gt;5' double stranded DNA exonuclease activity. The polypeptide is Cell cycle checkpoint protein RAD1 homolog mrt-2 (Caenorhabditis elegans).